A 564-amino-acid polypeptide reads, in one-letter code: Potassium-transporting ATPase potassium-binding subunit (564 aa).

10 helical membrane passes run 4 to 24 (HEIL…PFLG), 67 to 87 (TLAL…ILML), 135 to 155 (VGLT…LVAL), 179 to 199 (LYVL…QGVP), 258 to 278 (FEVA…GHYV), 286 to 306 (AILG…LWAE), 376 to 396 (IFGG…IAVF), 420 to 440 (LLVF…AIAA), 487 to 507 (LMIG…ILAI), and 528 to 548 (GPLF…LTFL).

This sequence belongs to the KdpA family. In terms of assembly, the system is composed of three essential subunits: KdpA, KdpB and KdpC.

Its subcellular location is the cell inner membrane. Its function is as follows. Part of the high-affinity ATP-driven potassium transport (or Kdp) system, which catalyzes the hydrolysis of ATP coupled with the electrogenic transport of potassium into the cytoplasm. This subunit binds the periplasmic potassium ions and delivers the ions to the membrane domain of KdpB through an intramembrane tunnel. This Pseudomonas aeruginosa (strain ATCC 15692 / DSM 22644 / CIP 104116 / JCM 14847 / LMG 12228 / 1C / PRS 101 / PAO1) protein is Potassium-transporting ATPase potassium-binding subunit.